We begin with the raw amino-acid sequence, 203 residues long: MKKLAITCALLSGMVVSQVWADAASDLKSRLDKVSSFHASFTQKVTDGSGNAVQDGQGDLWVKRPNLFNWHMTQPDESVLVSDGKTLWFYNPFVEQATATWLKDATSNTPFMLIARNQSSDWQQYNIKQNGDDFVLTPKSGSGNLKQFTINVGRDGTIHQFSAVEQDDQRSSYQLKSQQNGAVDASKFTFTPPKGVTVDDQRK.

Positions 1 to 21 are cleaved as a signal peptide; it reads MKKLAITCALLSGMVVSQVWA. Residues 184-203 form a disordered region; that stretch reads DASKFTFTPPKGVTVDDQRK.

This sequence belongs to the LolA family. In terms of assembly, monomer.

The protein resides in the periplasm. In terms of biological role, participates in the translocation of lipoproteins from the inner membrane to the outer membrane. Only forms a complex with a lipoprotein if the residue after the N-terminal Cys is not an aspartate (The Asp acts as a targeting signal to indicate that the lipoprotein should stay in the inner membrane). This chain is Outer-membrane lipoprotein carrier protein, found in Klebsiella pneumoniae (strain 342).